Reading from the N-terminus, the 383-residue chain is MKFSQALLSLASLALAAALPHASTPVYTPSTTPSPTPTPSASGSFATTSGIQFVIDGEAGYFPGSNAYWIGFLKNNSDVDLVFDHMASSGLRILRVWGFNDVNTAPTDGSVYFQLHQDGKSTINTGKDGLQRLDYVVHSAEKHGIKLIINFVNYWDDYGGMNAYMRAYGGGDKADWFENEGIQAAYQAYVEAVVKRYINSTAVFAWELANEPRCTGCEPSVLHNWIEKTSAFIKGLDEKHLVCIGDGSDGSYPFQYTEGSDFAAALTIDTIDFGTFHLYPDSWGTNNDWGKLWITSHAAACAAAGKPCLFEEYGVTSNHCAIEKQWQNAALNATGIAADLYWQYGDTLSSGPSPDDGNTFYYGSEEFECLVTNHVETIERSAK.

The signal sequence occupies residues 1–18; the sequence is MKFSQALLSLASLALAAA. A glycan (N-linked (GlcNAc...) asparagine) is linked at N75. A substrate-binding site is contributed by W97. A glycan (N-linked (GlcNAc...) asparagine) is linked at N199. Substrate contacts are provided by residues N210 and 211 to 213; that span reads EPR. The active-site Proton donor/acceptor is E211. A disulfide bridge connects residues C214 and C217. Residues Y279 and W283 each contribute to the substrate site. C301 and C308 are oxidised to a cystine. E312 serves as the catalytic Nucleophile. Cysteines 320 and 369 form a disulfide. The N-linked (GlcNAc...) asparagine glycan is linked to N332. W342 is a binding site for substrate.

This sequence belongs to the glycosyl hydrolase 5 (cellulase A) family. In terms of assembly, monomer.

Its subcellular location is the secreted. It catalyses the reaction Random hydrolysis of (1-&gt;4)-beta-D-mannosidic linkages in mannans, galactomannans and glucomannans.. Functionally, endo-1,4-mannanase that catalyzes the random hydrolysis of (1-&gt;4)-beta-D-mannosidic linkages in mannans and heteromannans. It is a crucial enzyme for depolymerization of seed galactomannans and wood galactoglucomannans. Active against locust bean gum and gum guar. Also has transglycosylation activity. The protein is Mannan endo-1,4-beta-mannosidase A (manA) of Emericella nidulans (strain FGSC A4 / ATCC 38163 / CBS 112.46 / NRRL 194 / M139) (Aspergillus nidulans).